Here is a 278-residue protein sequence, read N- to C-terminus: Acyl-[acyl-carrier-protein]--UDP-N-acetylglucosamine O-acyltransferase (278 aa).

This sequence belongs to the transferase hexapeptide repeat family. LpxA subfamily. Homotrimer.

The protein resides in the cytoplasm. It carries out the reaction a (3R)-hydroxyacyl-[ACP] + UDP-N-acetyl-alpha-D-glucosamine = a UDP-3-O-[(3R)-3-hydroxyacyl]-N-acetyl-alpha-D-glucosamine + holo-[ACP]. It functions in the pathway glycolipid biosynthesis; lipid IV(A) biosynthesis; lipid IV(A) from (3R)-3-hydroxytetradecanoyl-[acyl-carrier-protein] and UDP-N-acetyl-alpha-D-glucosamine: step 1/6. In terms of biological role, involved in the biosynthesis of lipid A, a phosphorylated glycolipid that anchors the lipopolysaccharide to the outer membrane of the cell. The protein is Acyl-[acyl-carrier-protein]--UDP-N-acetylglucosamine O-acyltransferase of Brucella abortus (strain S19).